We begin with the raw amino-acid sequence, 349 residues long: Phenylalanine--tRNA ligase alpha subunit (349 aa).

A Mg(2+)-binding site is contributed by glutamate 264.

The protein belongs to the class-II aminoacyl-tRNA synthetase family. Phe-tRNA synthetase alpha subunit type 1 subfamily. As to quaternary structure, tetramer of two alpha and two beta subunits. Requires Mg(2+) as cofactor.

The protein resides in the cytoplasm. It catalyses the reaction tRNA(Phe) + L-phenylalanine + ATP = L-phenylalanyl-tRNA(Phe) + AMP + diphosphate + H(+). This chain is Phenylalanine--tRNA ligase alpha subunit, found in Myxococcus xanthus (strain DK1622).